Reading from the N-terminus, the 569-residue chain is Beta-lactamase-like protein 4 (569 aa).

The N-terminal stretch at 1–19 (MKYYLYLFLLFTFANLLYS) is a signal peptide. N-linked (GlcNAc...) asparagine glycans are attached at residues asparagine 87, asparagine 172, asparagine 239, asparagine 240, asparagine 250, asparagine 299, asparagine 343, asparagine 412, asparagine 419, asparagine 436, asparagine 468, asparagine 509, and asparagine 535.

Belongs to the beta-lactamase family.

It is found in the secreted. The polypeptide is Beta-lactamase-like protein 4 (Dictyostelium discoideum (Social amoeba)).